A 603-amino-acid polypeptide reads, in one-letter code: UvrABC system protein C (603 aa).

Residues 15–92 (DQPGCYLMKN…IQKHQPYYNI (78 aa)) enclose the GIY-YIG domain. Residues 197–232 (AQVKKQLTARMERAAGQLEFERAAEIRDQLHYIEVT) form the UVR domain.

It belongs to the UvrC family. Interacts with UvrB in an incision complex.

The protein localises to the cytoplasm. Its function is as follows. The UvrABC repair system catalyzes the recognition and processing of DNA lesions. UvrC both incises the 5' and 3' sides of the lesion. The N-terminal half is responsible for the 3' incision and the C-terminal half is responsible for the 5' incision. The polypeptide is UvrABC system protein C (Limosilactobacillus fermentum (strain NBRC 3956 / LMG 18251) (Lactobacillus fermentum)).